The chain runs to 369 residues: Methylthioribose-1-phosphate isomerase (369 aa).

Residues 54 to 56 (RGA), arginine 95, and glutamine 208 contribute to the substrate site. Aspartate 249 functions as the Proton donor in the catalytic mechanism. 259-260 (NK) is a binding site for substrate.

It belongs to the eIF-2B alpha/beta/delta subunits family. MtnA subfamily.

It catalyses the reaction 5-(methylsulfanyl)-alpha-D-ribose 1-phosphate = 5-(methylsulfanyl)-D-ribulose 1-phosphate. Its pathway is amino-acid biosynthesis; L-methionine biosynthesis via salvage pathway; L-methionine from S-methyl-5-thio-alpha-D-ribose 1-phosphate: step 1/6. Catalyzes the interconversion of methylthioribose-1-phosphate (MTR-1-P) into methylthioribulose-1-phosphate (MTRu-1-P). The sequence is that of Methylthioribose-1-phosphate isomerase from Desulfosudis oleivorans (strain DSM 6200 / JCM 39069 / Hxd3) (Desulfococcus oleovorans).